Reading from the N-terminus, the 172-residue chain is Large ribosomal subunit protein uL10 (172 aa).

Belongs to the universal ribosomal protein uL10 family. In terms of assembly, part of the ribosomal stalk of the 50S ribosomal subunit. The N-terminus interacts with L11 and the large rRNA to form the base of the stalk. The C-terminus forms an elongated spine to which L12 dimers bind in a sequential fashion forming a multimeric L10(L12)X complex.

Functionally, forms part of the ribosomal stalk, playing a central role in the interaction of the ribosome with GTP-bound translation factors. The polypeptide is Large ribosomal subunit protein uL10 (Rhizobium johnstonii (strain DSM 114642 / LMG 32736 / 3841) (Rhizobium leguminosarum bv. viciae)).